We begin with the raw amino-acid sequence, 228 residues long: HTH-type transcriptional regulator ArcR (228 aa).

22–141 (SYINIPVGVL…VKLFSLLSET (120 aa)) provides a ligand contact to a nucleoside 3',5'-cyclic phosphate. In terms of domain architecture, HTH crp-type spans 155-228 (KLAKERVTKI…SKNWLVSKDL (74 aa)). A DNA-binding region (H-T-H motif) is located at residues 188–207 (IQLLSDMAGISRETTSHIIN).

Its subcellular location is the cytoplasm. Functionally, positively regulates the expression of the arcABDCR operon under anaerobic conditions, thus playing an essential role in arginine catabolism. May also control the expression of genes encoding proteins which are involved in anaerobic metabolism. Can bind cyclic AMP. The sequence is that of HTH-type transcriptional regulator ArcR (arcR) from Staphylococcus epidermidis (strain ATCC 35984 / DSM 28319 / BCRC 17069 / CCUG 31568 / BM 3577 / RP62A).